The following is a 345-amino-acid chain: Dimethyladenosine transferase 1, mitochondrial (345 aa).

Residues 1–27 (MAAPGKLSTCRLPPLPTIREIIKLFRL) constitute a mitochondrion transit peptide. The S-adenosyl-L-methionine site is built by leucine 38, glycine 63, glutamate 85, lysine 86, aspartate 111, valine 112, and asparagine 141.

Belongs to the class I-like SAM-binding methyltransferase superfamily. rRNA adenine N(6)-methyltransferase family. KsgA subfamily. In terms of assembly, interacts with mitochondrial RNA polymerase POLRMT. Interacts with TFAM. Bound to the maturing mtSSU until the late stages of assembly.

Its subcellular location is the mitochondrion. The enzyme catalyses adenosine(N)/adenosine(N+1) in rRNA + 4 S-adenosyl-L-methionine = N(6)-dimethyladenosine(N)/N(6)-dimethyladenosine(N+1) in rRNA + 4 S-adenosyl-L-homocysteine + 4 H(+). Functionally, mitochondrial methyltransferase which uses S-adenosyl methionine to dimethylate two highly conserved adjacent adenosine residues (A1583 and A1584) within the loop of helix 45 at the 3-prime end of 12S rRNA, thereby regulating the assembly or stability of the small subunit of the mitochondrial ribosome. Also required for basal transcription of mitochondrial DNA, probably via its interaction with POLRMT and TFAM. Stimulates transcription independently of the methyltransferase activity. The protein is Dimethyladenosine transferase 1, mitochondrial (TFB1M) of Macaca fascicularis (Crab-eating macaque).